The chain runs to 146 residues: Urease accessory protein UreE 1 (146 aa).

Belongs to the UreE family.

It is found in the cytoplasm. Functionally, involved in urease metallocenter assembly. Binds nickel. Probably functions as a nickel donor during metallocenter assembly. This is Urease accessory protein UreE 1 from Pseudomonas syringae pv. tomato (strain ATCC BAA-871 / DC3000).